The primary structure comprises 368 residues: Cytochrome b-c1 complex subunit 2, mitochondrial (368 aa).

The N-terminal 16 residues, 1-16 (MLSAARLQFAQGSVRR), are a transit peptide targeting the mitochondrion. Residues serine 141 and serine 168 each carry the phosphoserine modification.

This sequence belongs to the peptidase M16 family. UQCRC2/QCR2 subfamily. In terms of assembly, component of the ubiquinol-cytochrome c oxidoreductase (cytochrome b-c1 complex, complex III, CIII), a multisubunit enzyme composed of 10 subunits. The complex is composed of 3 respiratory subunits cytochrome b (COB), cytochrome c1 (CYT1) and Rieske protein (RIP1), 2 core protein subunits COR1 and QCR2, and 5 low-molecular weight protein subunits QCR6, QCR7, QCR8, QCR9 and QCR10. The complex exists as an obligatory dimer and forms supercomplexes (SCs) in the inner mitochondrial membrane with a monomer or a dimer of cytochrome c oxidase (complex IV, CIV), resulting in 2 different assemblies (supercomplexes III(2)IV and III(2)IV(2)).

The protein localises to the mitochondrion inner membrane. Its function is as follows. Component of the ubiquinol-cytochrome c oxidoreductase, a multisubunit transmembrane complex that is part of the mitochondrial electron transport chain which drives oxidative phosphorylation. The respiratory chain contains 3 multisubunit complexes succinate dehydrogenase (complex II, CII), ubiquinol-cytochrome c oxidoreductase (cytochrome b-c1 complex, complex III, CIII) and cytochrome c oxidase (complex IV, CIV), that cooperate to transfer electrons derived from NADH and succinate to molecular oxygen, creating an electrochemical gradient over the inner membrane that drives transmembrane transport and the ATP synthase. The cytochrome b-c1 complex catalyzes electron transfer from ubiquinol to cytochrome c, linking this redox reaction to translocation of protons across the mitochondrial inner membrane, with protons being carried across the membrane as hydrogens on the quinol. In the process called Q cycle, 2 protons are consumed from the matrix, 4 protons are released into the intermembrane space and 2 electrons are passed to cytochrome c. This chain is Cytochrome b-c1 complex subunit 2, mitochondrial (QCR2), found in Saccharomyces cerevisiae (strain ATCC 204508 / S288c) (Baker's yeast).